We begin with the raw amino-acid sequence, 73 residues long: Small ribosomal subunit protein bS18 (73 aa).

This sequence belongs to the bacterial ribosomal protein bS18 family. As to quaternary structure, part of the 30S ribosomal subunit. Forms a tight heterodimer with protein bS6.

Its function is as follows. Binds as a heterodimer with protein bS6 to the central domain of the 16S rRNA, where it helps stabilize the platform of the 30S subunit. The protein is Small ribosomal subunit protein bS18 of Neorickettsia sennetsu (strain ATCC VR-367 / Miyayama) (Ehrlichia sennetsu).